The chain runs to 1316 residues: MLDVNFFDELRIGLATAEDIRQWSYGEVKKPETINYRTLKPEKDGLFCEKIFGPTRDWECYCGKYKRVRFKGIICERCGVEVTRAKVRRERMGHIELAAPVTHIWYFKGVPSRLGYLLDLAPKDLEKIIYFAAYVITSVDEEMRHNELSTLEAEMMVERKAVEDQRDADLEARAQKLEADLAELEAEGAKADARRKVRDSGEREMRQIRDRAQRELDRLEDIWNTFTKLAPKQLIVDENLYRELVDRYGEYFTGAMGAESIQKLIENFDIDAEAEQLRDVIRNGKGQKKLRALKRLKVVAAFQQSGNSPMGMVLDAVPVIPPELRPMVQLDGGRFATSDLNDLYRRVINRNNRLKRLIDLGAPEIIVNNEKRMLQESVDALFDNGRRGRPVTGPGNRPLKSLSDLLKGKQGRFRQNLLGKRVDYSGRSVIVVGPQLKLHQCGLPKLMALELFKPFVMKRLVDLNHAQNIKSAKRMVERQRPQVWDVLEEVIAEHPVLLNRAPTLHRLGIQAFEPMLVEGKAIQLHPLVCEAFNADFDGDQMAVHLPLSAEAQAEARILMLSSNNILSPASGRPLAMPRLDMVTGLYYLTTEVEGDKGEYSPAAKDRPETGVYSSPAEAIMAADRGVLSVRAKIKVRLTQLRPPAEIEAELFGANGWQPGDAWMAETTLGRVLFNELLPVGYPFVNKQMHKKVQASIINDLAERYPMIVVAQTVDKLKDAGFYWATRSGVTVSMADVLVPPRKKEILDQYEERAEKVEKQFQRGALNHDERNEALVEIWKEATDEVGQALREHYPADNPIITIVDSGATGNFTQTRTLAGMKGLVTNPKGEFIPRPVKSSFREGLTVLEYFINTHGARKGLADTALRTADSGYLTRRLVDVSQDVIVREHDCETERGIVVELAERQPDGTLIRDPYIETSAYARTLGTDAVDEAGNVIVARGEDLGDPEIDALLAAGITSVKVRSVLTCTTGTGVCATCYGRSMATGKLVDIGEAVGIVAAQSIGEPGTQLTMRTFHQGGVGEDITGGLPRVQELFEARIPRGKAPIADVTGRVRLEDGERFYKITIVPDDGSEEVVYDKLSKRQRLRVFKHEDGSERVLSDGDHVEVGQQLMEGSADPHEVLRVQGPREVQIHLVREVQEVYRAQGVSIHDKHIEVIVRQMLRRVTIIDSGSTEFLPGSLIDRAEFEAENRRVVAEGGEPAAGRPVLMGITKASLATDSWLSAASFQETTRVLTDAAINCRSDKLNGLKENVIIGKLIPAGTGINRYRNIQVQPTEEARAAAYTIPSYEDQYYSPDFGQATGAAVPLDDYGYSDYR.

The Zn(2+) site is built by Cys-60, Cys-62, Cys-75, and Cys-78. Mg(2+) contacts are provided by Asp-535, Asp-537, and Asp-539. Positions 891, 968, 975, and 978 each coordinate Zn(2+).

Belongs to the RNA polymerase beta' chain family. In terms of assembly, the RNAP catalytic core consists of 2 alpha, 1 beta, 1 beta' and 1 omega subunit. When a sigma factor is associated with the core the holoenzyme is formed, which can initiate transcription. Mg(2+) is required as a cofactor. It depends on Zn(2+) as a cofactor.

The catalysed reaction is RNA(n) + a ribonucleoside 5'-triphosphate = RNA(n+1) + diphosphate. DNA-dependent RNA polymerase catalyzes the transcription of DNA into RNA using the four ribonucleoside triphosphates as substrates. This is DNA-directed RNA polymerase subunit beta' from Mycolicibacterium paratuberculosis (strain ATCC BAA-968 / K-10) (Mycobacterium paratuberculosis).